Consider the following 2971-residue polypeptide: Reticulocyte-binding protein homolog 1 (2971 aa).

The N-terminal stretch at M1–F20 is a signal peptide. The Extracellular portion of the chain corresponds to S21–R2897. A disordered region spans residues N30–E50. N-linked (GlcNAc...) asparagine glycans are attached at residues N70, N78, N87, N135, N286, N384, and N417. The interval L500 to N833 is erythrocyte binding domain (EBD). LRR repeat units follow at residues Y528–D553 and L607–K633. An N-linked (GlcNAc...) asparagine glycan is attached at N685. LRR repeat units follow at residues I736 to D758 and Q785 to E808. 4 N-linked (GlcNAc...) asparagine glycosylation sites follow: N830, N892, N1000, and N1010. LRR repeat units follow at residues L993–D1018 and L1356–E1381. N1425 carries N-linked (GlcNAc...) asparagine glycosylation. The LRR 7 repeat unit spans residues A1466–E1489. N-linked (GlcNAc...) asparagine glycosylation is present at N1496. LRR repeat units lie at residues Y1512–N1537, S1586–E1609, and E1611–N1636. Residues N1664, N1692, N1718, N1816, and N1844 are each glycosylated (N-linked (GlcNAc...) asparagine). LRR repeat units lie at residues L1700–Y1723 and L1809–N1834. The stretch at Q1880–E1903 is one LRR 13 repeat. 2 N-linked (GlcNAc...) asparagine glycosylation sites follow: N1913 and N1918. An LRR 14 repeat occupies K1944–F1967. Residues N2054, N2207, N2289, N2300, N2338, and N2405 are each glycosylated (N-linked (GlcNAc...) asparagine). Residues I2523–I2548 form an LRR 15 repeat. N2598 and N2752 each carry an N-linked (GlcNAc...) asparagine glycan. Residues E2731 to T2754 form an LRR 16 repeat. 2 stretches are compositionally biased toward basic and acidic residues: residues K2773–N2782 and Q2795–L2804. Disordered regions lie at residues K2773–Q2825 and H2840–Q2862. N2811 carries an N-linked (GlcNAc...) asparagine glycan. The segment covering E2814–Q2825 has biased composition (basic and acidic residues). Residues M2898–I2918 traverse the membrane as a helical segment. Residues N2919–I2971 lie on the Cytoplasmic side of the membrane.

In terms of assembly, may in part interact with AMA1 in the moving tight junction between the parasite and the erythrocyte membranes; the interaction may facilitate junction formation and active invasion. Proteolytically processed into multiple fragments following schizont rupture. In the mature schizont stage prior to merozoite release, full length RH1 is processed post-Golgi into a 240 kDa N-terminal form and a 120 kDa C-terminal form containing the transmembrane region. Both forms appear not to form a complex. However, they appear to remain in close proximity in late schizonts. Following merozoite invasion of host erythrocytes, the 240 kDa form is further processed into a 140 kDa form which may be involved in the disengagement of the ligand-receptor complex required during the invasion process. Also, the 120 kDa is further cleaved into a 110 kDa form and a transmembrane 9 kDa form probably by ROM4.

Its subcellular location is the cell membrane. The protein resides in the secreted. It is found in the cell junction. The protein localises to the tight junction. It localises to the cytoplasmic vesicle. Its subcellular location is the secretory vesicle. The protein resides in the rhoptry. Its function is as follows. During the asexual blood stage, binds to a sialic acid containing receptor on the surface of the host erythrocyte and thus is involved in merozoite invasion. Binds erythrocytes via a neuraminidase sensitive and trypsin-, chymotrypsin-resistant receptor. After merozoite attachment and reorientation, RH1 binding to its erythrocyte receptor triggers an increase in intracellular Ca(2+) within the parasite resulting in the release of microneme proteins such as EBA175 which in turn leads to the formation of the tight junction between parasite and host cell. The sequence is that of Reticulocyte-binding protein homolog 1 from Plasmodium falciparum (isolate 3D7).